The primary structure comprises 226 residues: Large ribosomal subunit protein uL4 (226 aa).

Residues 47–74 (GTAKAKTRSEVSGGGRKPWPQKHTGRAR) are disordered.

Belongs to the universal ribosomal protein uL4 family. As to quaternary structure, part of the 50S ribosomal subunit.

In terms of biological role, one of the primary rRNA binding proteins, this protein initially binds near the 5'-end of the 23S rRNA. It is important during the early stages of 50S assembly. It makes multiple contacts with different domains of the 23S rRNA in the assembled 50S subunit and ribosome. Forms part of the polypeptide exit tunnel. This is Large ribosomal subunit protein uL4 from Kosmotoga olearia (strain ATCC BAA-1733 / DSM 21960 / TBF 19.5.1).